Here is a 132-residue protein sequence, read N- to C-terminus: Small ribosomal subunit protein uS8 (132 aa).

Belongs to the universal ribosomal protein uS8 family. As to quaternary structure, part of the 30S ribosomal subunit. Contacts proteins S5 and S12.

Functionally, one of the primary rRNA binding proteins, it binds directly to 16S rRNA central domain where it helps coordinate assembly of the platform of the 30S subunit. The polypeptide is Small ribosomal subunit protein uS8 (Bacillus cytotoxicus (strain DSM 22905 / CIP 110041 / 391-98 / NVH 391-98)).